The primary structure comprises 485 residues: Polyol:NADP oxidoreductase (485 aa).

It belongs to the mannitol dehydrogenase family.

The protein localises to the cytoplasm. The polypeptide is Polyol:NADP oxidoreductase (por) (Gluconobacter oxydans (strain 621H) (Gluconobacter suboxydans)).